The following is a 747-amino-acid chain: Putative T-box protein 31 (747 aa).

Positions 33–199 (QMLTKRKKTN…AGPAAKKTPD (167 aa)) form a DNA-binding region, T-box. Disordered regions lie at residues 268-289 (SLSS…DFDD) and 332-364 (SINN…VRDK). The segment covering 332-358 (SINNPGYLSTASSPAALNQDSSASEKS) has biased composition (polar residues).

It is found in the nucleus. The chain is Putative T-box protein 31 (tbx-31) from Caenorhabditis elegans.